The primary structure comprises 229 residues: Putative N-acetylmannosamine-6-phosphate 2-epimerase (229 aa).

Belongs to the NanE family.

The catalysed reaction is an N-acyl-D-glucosamine 6-phosphate = an N-acyl-D-mannosamine 6-phosphate. It functions in the pathway amino-sugar metabolism; N-acetylneuraminate degradation; D-fructose 6-phosphate from N-acetylneuraminate: step 3/5. Its function is as follows. Converts N-acetylmannosamine-6-phosphate (ManNAc-6-P) to N-acetylglucosamine-6-phosphate (GlcNAc-6-P). The protein is Putative N-acetylmannosamine-6-phosphate 2-epimerase of Actinobacillus pleuropneumoniae serotype 3 (strain JL03).